The sequence spans 237 residues: Segregation and condensation protein A (237 aa).

The protein belongs to the ScpA family. In terms of assembly, component of a cohesin-like complex composed of ScpA, ScpB and the Smc homodimer, in which ScpA and ScpB bind to the head domain of Smc. The presence of the three proteins is required for the association of the complex with DNA.

It is found in the cytoplasm. Participates in chromosomal partition during cell division. May act via the formation of a condensin-like complex containing Smc and ScpB that pull DNA away from mid-cell into both cell halves. The polypeptide is Segregation and condensation protein A (Streptococcus thermophilus (strain CNRZ 1066)).